A 383-amino-acid chain; its full sequence is 3-dehydroquinate synthase (383 aa).

NAD(+)-binding positions include 81–86, 115–119, 139–140, Lys152, and Lys161; these read EGEVSK, GVVGD, and TS. Positions 194, 256, and 274 each coordinate Zn(2+).

It belongs to the sugar phosphate cyclases superfamily. Dehydroquinate synthase family. The cofactor is Co(2+). It depends on Zn(2+) as a cofactor. NAD(+) serves as cofactor.

It localises to the cytoplasm. It catalyses the reaction 7-phospho-2-dehydro-3-deoxy-D-arabino-heptonate = 3-dehydroquinate + phosphate. It functions in the pathway metabolic intermediate biosynthesis; chorismate biosynthesis; chorismate from D-erythrose 4-phosphate and phosphoenolpyruvate: step 2/7. In terms of biological role, catalyzes the conversion of 3-deoxy-D-arabino-heptulosonate 7-phosphate (DAHP) to dehydroquinate (DHQ). The chain is 3-dehydroquinate synthase from Nitrobacter winogradskyi (strain ATCC 25391 / DSM 10237 / CIP 104748 / NCIMB 11846 / Nb-255).